Reading from the N-terminus, the 578-residue chain is SWR1 complex bromodomain subunit bdf1 (578 aa).

Residues 1-18 (MSSESRENEVKAETKDEI) show a composition bias toward basic and acidic residues. Disordered regions lie at residues 1 to 89 (MSSE…PPPQ), 192 to 254 (DAEQ…RKNN), and 504 to 578 (ADSS…SESA). Positions 22 to 36 (GSPQLNGDNNIQSSD) are enriched in polar residues. 2 stretches are compositionally biased toward basic and acidic residues: residues 37 to 52 (GHND…KRDS) and 60 to 77 (LKQE…EPTV). Residues 84 to 190 (GMPPPQQKYC…EVFERQLKQL (107 aa)) enclose the Bromo 1 domain. The span at 219 to 242 (NSSVSSTSASVAASTAPKAASPAV) shows a compositional bias: low complexity. 3 positions are modified to phosphoserine: serine 221, serine 223, and serine 224. A Phosphothreonine modification is found at threonine 225. 2 positions are modified to phosphoserine: serine 226 and serine 239. Residues 251–360 (RKNNSQMRFC…NVFKEKWEAR (110 aa)) enclose the Bromo 2 domain. Residues 430–510 (RRDLTKEYGP…KPDADSSEPA (81 aa)) form the NET domain. Serine 511 is modified (phosphoserine). Residues 526 to 537 (VLSETEQAEKIR) are compositionally biased toward basic and acidic residues. Over residues 550–563 (TSPTSPESNNAANV) the composition is skewed to polar residues. Positions 566–578 (SESDNESESSESA) are enriched in acidic residues.

The protein belongs to the BET family. In terms of assembly, component of the SWR1 chromatin-remodeling complex.

Its subcellular location is the nucleus. Functionally, component of the SWR1 complex which mediates the ATP-dependent exchange of histone H2A for the H2A variant HZT1 leading to transcriptional regulation of selected genes by chromatin remodeling. This Schizosaccharomyces pombe (strain 972 / ATCC 24843) (Fission yeast) protein is SWR1 complex bromodomain subunit bdf1 (bdf1).